Reading from the N-terminus, the 694-residue chain is Putative L-type lectin-domain containing receptor kinase II.2 (694 aa).

A signal peptide spans 1-24 (MAGVLRSLRFWMIICVQVLSLVLA). The Extracellular segment spans residues 25 to 318 (QDRDEFVYHD…PTSRSKDSKN (294 aa)). A legume-lectin like region spans residues 27 to 272 (RDEFVYHDFS…DQYILGWSFK (246 aa)). Asparagine 57, asparagine 58, asparagine 73, asparagine 131, asparagine 172, asparagine 183, asparagine 201, asparagine 208, asparagine 240, and asparagine 246 each carry an N-linked (GlcNAc...) asparagine glycan. Residues 283-314 (SKILDPPNRPPPPSSPPPPPPPPPTPPTSRSK) form a disordered region. A compositionally biased stretch (pro residues) spans 289-309 (PNRPPPPSSPPPPPPPPPTPP). The helical transmembrane segment at 319–339 (IIIICVTVTSIAFLLMLGGFL) threads the bilayer. At 340-694 (YLYKKKKYAE…EDVTILFGGR (355 aa)) the chain is on the cytoplasmic side. The region spanning 375-650 (FRENRLLGAG…IQYLEGNATI (276 aa)) is the Protein kinase domain. ATP is bound by residues 381-389 (LGAGGFGKV) and lysine 403. The active-site Proton acceptor is the aspartate 500.

This sequence in the C-terminal section; belongs to the protein kinase superfamily. Ser/Thr protein kinase family. In the N-terminal section; belongs to the leguminous lectin family.

The protein resides in the cell membrane. It catalyses the reaction L-seryl-[protein] + ATP = O-phospho-L-seryl-[protein] + ADP + H(+). The enzyme catalyses L-threonyl-[protein] + ATP = O-phospho-L-threonyl-[protein] + ADP + H(+). The protein is Putative L-type lectin-domain containing receptor kinase II.2 (LECRK22) of Arabidopsis thaliana (Mouse-ear cress).